The following is a 501-amino-acid chain: CaM kinase-like vesicle-associated protein (501 aa).

The region spanning 24–286 (YDLGQVIKTE…AEEAISHEWI (263 aa)) is the Protein kinase domain. The disordered stretch occupies residues 327-501 (RAPEQSSTAA…AQESQREEAS (175 aa)). Residues 331–365 (QSSTAAAQSASATDTATPGAAGGATAAAASGATSA) show a composition bias toward low complexity. The segment covering 387–428 (TPATDGSATPATDGSVTPATDGSITPATDGSVTPATDRSATP) has biased composition (polar residues). Thr-435 bears the Phosphothreonine mark. The span at 438 to 451 (TEESTVPTTQSSAM) shows a compositional bias: polar residues. Thr-459 is modified (phosphothreonine).

The protein belongs to the protein kinase superfamily. CAMK Ser/Thr protein kinase family. In terms of assembly, interacts with calmodulin, in the presence of calcium. Ca(2+) is required as a cofactor.

The protein resides in the cell membrane. The protein localises to the cytoplasmic vesicle membrane. Its function is as follows. Does not appear to have detectable kinase activity. The sequence is that of CaM kinase-like vesicle-associated protein (CAMKV) from Homo sapiens (Human).